Here is a 136-residue protein sequence, read N- to C-terminus: Glutamyl-tRNA(Gln) amidotransferase subunit C, mitochondrial (136 aa).

A mitochondrion-targeting transit peptide spans 1–27 (MWARAVHLGLRAAARGRRGFTSKADPQ).

The protein belongs to the GatC family. As to quaternary structure, subunit of the heterotrimeric GatCAB amidotransferase (AdT) complex, composed of A (QRSL1), B (GATB) and C (GATC) subunits.

The protein localises to the mitochondrion. It carries out the reaction L-glutamyl-tRNA(Gln) + L-glutamine + ATP + H2O = L-glutaminyl-tRNA(Gln) + L-glutamate + ADP + phosphate + H(+). In terms of biological role, allows the formation of correctly charged Gln-tRNA(Gln) through the transamidation of misacylated Glu-tRNA(Gln) in the mitochondria. The reaction takes place in the presence of glutamine and ATP through an activated gamma-phospho-Glu-tRNA(Gln). In Bos taurus (Bovine), this protein is Glutamyl-tRNA(Gln) amidotransferase subunit C, mitochondrial.